The primary structure comprises 320 residues: tRNA-cytidine(32) 2-sulfurtransferase (320 aa).

The short motif at S54 to S59 is the PP-loop motif element. The [4Fe-4S] cluster site is built by C129, C132, and C220.

Belongs to the TtcA family. As to quaternary structure, homodimer. Requires Mg(2+) as cofactor. It depends on [4Fe-4S] cluster as a cofactor.

It is found in the cytoplasm. It catalyses the reaction cytidine(32) in tRNA + S-sulfanyl-L-cysteinyl-[cysteine desulfurase] + AH2 + ATP = 2-thiocytidine(32) in tRNA + L-cysteinyl-[cysteine desulfurase] + A + AMP + diphosphate + H(+). It participates in tRNA modification. Its function is as follows. Catalyzes the ATP-dependent 2-thiolation of cytidine in position 32 of tRNA, to form 2-thiocytidine (s(2)C32). The sulfur atoms are provided by the cysteine/cysteine desulfurase (IscS) system. The protein is tRNA-cytidine(32) 2-sulfurtransferase of Bordetella bronchiseptica (strain ATCC BAA-588 / NCTC 13252 / RB50) (Alcaligenes bronchisepticus).